Consider the following 249-residue polypeptide: Probable phosphatase VVA0289 (249 aa).

Zn(2+) is bound by residues His-8, His-10, His-16, His-41, Glu-74, His-102, His-132, Asp-194, and His-196.

The protein belongs to the PHP family. Zn(2+) is required as a cofactor.

The sequence is that of Probable phosphatase VVA0289 from Vibrio vulnificus (strain YJ016).